Here is a 343-residue protein sequence, read N- to C-terminus: Nuclear distribution protein nudE-like 1 (343 aa).

A coiled-coil region spans residues 25–190 (KYKQSFQEAR…LAVRERQQEV (166 aa)). Disordered stretches follow at residues 184–204 (RERQ…LDCE) and 322–343 (QGTP…PLSV).

This sequence belongs to the nudE family. Phosphorylated in mitosis.

The protein resides in the cytoplasm. The protein localises to the cytoskeleton. Its subcellular location is the microtubule organizing center. It localises to the centrosome. It is found in the spindle. In terms of biological role, required for organization of the cellular microtubule array and microtubule anchoring at the centrosome. Positively regulates the activity of the minus-end directed microtubule motor protein dynein. May enhance dynein-mediated microtubule sliding by targeting dynein to the microtubule plus end. Positively regulates lysosome peripheral distribution and ruffled border formation in osteoclasts. The chain is Nuclear distribution protein nudE-like 1 (NDEL1) from Gallus gallus (Chicken).